A 400-amino-acid chain; its full sequence is Aspartate aminotransferase (400 aa).

Residues Gly42 and Asn180 each coordinate L-aspartate. Position 241 is an N6-(pyridoxal phosphate)lysine (Lys241). Arg373 lines the L-aspartate pocket.

This sequence belongs to the class-I pyridoxal-phosphate-dependent aminotransferase family. Homodimer. Pyridoxal 5'-phosphate serves as cofactor.

It is found in the cytoplasm. It catalyses the reaction L-aspartate + 2-oxoglutarate = oxaloacetate + L-glutamate. The protein is Aspartate aminotransferase (aspC) of Sulfolobus acidocaldarius (strain ATCC 33909 / DSM 639 / JCM 8929 / NBRC 15157 / NCIMB 11770).